Reading from the N-terminus, the 1745-residue chain is MECCRRAAPGTPLLVLAFLLLSSRTARSEEDREGLWDAWGPWSECSRTCGGGASYSLRRCLSSKSCEGRNIRYRTCSNVDCPPEAGDFRAQQCSAHNDVKYHGQLYEWLPVSNDPDNPCSLKCQAKGTSLVVELAPKVLDGTRCYTESLDMCISGLCQIVGCDHQLGSTVKEDNCGVCNGDGSTCRLVRGQYKSQLSASKSDDTVVAIPYGSRHIRLVLKGPDHLYLETKTLQGTKGENSLSSTGIFLVDNSTVDFQKLPDKEILRMTGPLTADFIIKIHDLGPADSTVQFIFYQPIIHRWRETDFFPCSATCGGGYQLTSAECYDLRSNRVVADQYCHYYPENVKPKPKLQECNLDPCPASDGYKQIMPYDLYHPLPRWEATPWTACSSSCGGGIQSRAVSCVEEDIQGHVTSVEEWKCMYTPKMPVVQPCNIFDCPKWLAQEWSPCTVTCGQGLRYRVVLCIDHRGMHTGGCSAKTKPHIKEECIIPTPCYKPREKLPIEAKLPWFKQAQELEEGAAVSEEPSFIPEAWSACTVTCGVGTQVRIIRCQVLLPFSQSVADLPADECEGPKPASQRACYAGPCNGETPEFNPDNGDGLLGGLQDLDELYDWEYEGFTKCSESCGGGVQEAVVSCLNKQTRELADENLCVTSRRPPQLLKSCNLDPCPASHLLSREMNEVVVLADELCHHPKPSTVQACNRFNCPPAWYPAQWQLCSRTCGGGIQKRDVLCKQRMADGSFLELPETFCSASKPTSHQGCKKDDCPSEWLLSEWSECSVSCGEGTQTRSAICQRVLKTGVSTVVNSTLCPPLPFSSSIRPCMLATCARPGRPSTKHSPHIAAARNIYIQTRRQRKLHFVVGGFAYLLPKTTVVLRCPTRRFRKPLITWEKDGQHSISSAHVTVAPFGYLKIHRLKPSDAGIYTCSAGPAREQFVIKLIGGNRKLVARPLSLWSEEEEALQVRKTNPKEALQTHKHQNGIFSNGSKAEKRGLTADPGNRYDDIVSRLLEQGGWPGELLASWEVQDSAERNASSEEDPNAEQALLHLPFTMVAEQKRLDDILRNLSQQPEELRDLYSKHLVAQLAQDIFRSHLENQDLLPKPSEQRFPPMAVPAHKHVSGFSSSLRSSSGEAGGGSRRPHRKPAILRKISAAQQLSASEVVTHLGQTVALASGTLSVLLHCEAVGNPRPTIHWTRNGEAVQFSDRILLQPDDSLQILAPVEADVGFYTCNATNALGYDSVSIAVTLAGKPLVKTSRMTVLNTEKPTVTVDIGGTVRTVRGVNVTINCQVAGVPEAEVTWFRNKSKLGSSHHLHEGSSHHLHEGSLLLTDVSFSDQGLYSCRAANLHGEQTESTQLLILDPPQVPTQLEDIRALLLATGPNLPSVLMSPLGTQLVLDPGNSALLGCPIKGHPTPNITWFQNGQPIATAPGLTHHIWGAGQILRVANLSGGPQGEFSCLAQNEAGTLLQKASLVIQDYWWSVDRLATCSASCGNRGIHQPRLRCLLNTTEVDPEHCTGKPRPAVQPVACNRRDCPSRWMVTSWSACTRSCGGGVQTRRVTCQKLKASGISTPVSNDMCSQLAKRPVDTQACNQQLCVEWAFSSWGQCNGPCIGPRLAVQHRQVFCQTRDGITLPSEQCSALPRPVSTQNCWSEACSVHWRVSLWTLCTATCGNYGFQSRRVECVHVRTNKAVPEHLCSWGPRPANWQRCNVTPCENTECRDTTRYCEKVRQLKLCQLGQFRSRCCGTCGKA.

The first 28 residues, 1–28 (MECCRRAAPGTPLLVLAFLLLSSRTARS), serve as a signal peptide directing secretion. The 50-residue stretch at 33–82 (EGLWDAWGPWSECSRTCGGGASYSLRRCLSSKSCEGRNIRYRTCSNVDCP) folds into the TSP type-1 1 domain. 3 disulfides stabilise this stretch: cysteine 45–cysteine 76, cysteine 49–cysteine 81, and cysteine 60–cysteine 66. An N-linked (GlcNAc...) asparagine glycan is attached at asparagine 251. O-linked (Fuc...) serine glycosylation is found at serine 310 and serine 391. 6 TSP type-1 domains span residues 376–424 (PLPR…MYTP), 436–493 (DCPK…TPCY), 522–584 (EEPS…GPCN), 607–667 (ELYD…DPCP), 703–762 (CPPA…KKDD), and 763–825 (CPSE…ATCA). An O-linked (Fuc...) threonine glycan is attached at threonine 451. 3 disulfides stabilise this stretch: cysteine 534-cysteine 578, cysteine 538-cysteine 583, and cysteine 549-cysteine 567. Cystine bridges form between cysteine 775–cysteine 819, cysteine 779–cysteine 824, cysteine 790–cysteine 807, and cysteine 874–cysteine 922. The Ig-like C2-type 1 domain maps to 836–938 (PHIAAARNIY…EQFVIKLIGG (103 aa)). Disordered regions lie at residues 966-991 (EALQ…GLTA) and 1114-1137 (VSGF…RPHR). The segment covering 1115 to 1126 (SGFSSSLRSSSG) has biased composition (low complexity). Ig-like C2-type domains are found at residues 1139–1241 (PAIL…IAVT), 1261–1352 (PTVT…TQLL), and 1378–1468 (PSVL…ASLV). Cystine bridges form between cysteine 1177/cysteine 1225, cysteine 1283/cysteine 1336, and cysteine 1401/cysteine 1452. 2 TSP type-1 domains span residues 1528-1591 (CPSR…QLCV) and 1649-1709 (CSVH…TPCE). The region spanning 1709 to 1745 (ENTECRDTTRYCEKVRQLKLCQLGQFRSRCCGTCGKA) is the PLAC domain.

In terms of assembly, monomer. Glycosylated. O-fucosylated by POFUT2 on a serine or a threonine residue found within the consensus sequence C1-X(2)-(S/T)-C2-G of the TSP type-1 repeat domains where C1 and C2 are the first and second cysteine residue of the repeat, respectively. Fucosylated repeats can then be further glycosylated by the addition of a beta-1,3-glucose residue by the glucosyltransferase, B3GALTL. Fucosylation mediates the efficient secretion of ADAMTS family members. Can also be C-glycosylated with one or two mannose molecules on tryptophan residues within the consensus sequence W-X-X-W of the TPRs, and N-glycosylated. These other glycosylations can also facilitate secretion. Post-translationally, disulfide bonds are present.

Its subcellular location is the secreted. It localises to the extracellular space. It is found in the extracellular matrix. In Mus musculus (Mouse), this protein is ADAMTS-like protein 1 (Adamtsl1).